The following is a 524-amino-acid chain: Zinc finger protein GLIS2 (524 aa).

The tract at residues 35–174 (ALHRELGLVD…PKQLVCRWAK (140 aa)) is interaction with CTNND1. 2 disordered regions span residues 39 to 62 (ELGLVDDSPTPGSPGSPPSGFLLN) and 84 to 114 (SPPSGLDSPNGSSSLSPERQGNGDLPPVPSA). The interval 71–137 (GRFSAAPLVD…SSFQFFLPLG (67 aa)) is transcription activation. Over residues 84–100 (SPPSGLDSPNGSSSLSP) the composition is skewed to low complexity. The segment at 148–171 (SFLTPPKDKCLSPDLPLPKQLVCR) is transcription repression. Residues 168–193 (LVCRWAKCNQLFELLQDLVDHVNDYH) form a C2H2-type 1 zinc finger. A C2H2-type 2; atypical zinc finger spans residues 202–229 (YCCHWEGCARHGRGFNARYKMLIHIRTH). C2H2-type zinc fingers lie at residues 235–257 (HRCPTCSKSFSRLENLKIHNRSH), 263–287 (YVCPYEGCNKRYSNSSDRFKHTRTH), and 293–317 (YYCKMPGCHKRYTDPSSLRKHIKAH). The tract at residues 439–480 (GGKAEGEKGRGSVPTRALGMEGHKTPLERTESSCSRPSPDGL) is disordered. Residues 459–469 (EGHKTPLERTE) are compositionally biased toward basic and acidic residues.

It belongs to the GLI C2H2-type zinc-finger protein family. Interacts with CTBP1 and HDAC3. Interacts with CTNNB1. Interacts with SUFU. Interacts with CTNND1. C-terminus cleavage is induced by interaction with CTNND1 and enhanced by Src tyrosine kinase. As to expression, expressed at high levels in kidney and at low levels in heart, lung and placenta. Expressed in colon.

It is found in the nucleus speckle. The protein resides in the cytoplasm. Can act either as a transcriptional repressor or as a transcriptional activator, depending on the cell context. Acts as a repressor of the Hedgehog signaling pathway. Represses the Hedgehog-dependent expression of Wnt4. Necessary to maintain the differentiated epithelial phenotype in renal cells through the inhibition of SNAI1, which itself induces the epithelial-to-mesenchymal transition. Represses transcriptional activation mediated by CTNNB1 in the Wnt signaling pathway. May act by recruiting the corepressors CTBP1 and HDAC3. May be involved in neuron differentiation. This is Zinc finger protein GLIS2 (GLIS2) from Homo sapiens (Human).